We begin with the raw amino-acid sequence, 343 residues long: MSDEDDLEDSEPDQDDSEKEEDEKETEEGEDYRKEGEEFPEEWLPTPLTEDMMKEGLSLLCKTGNGLAHAYVKLEVKERDLTDIYLLRSYIHLRYVDISENHLTDLSPLNYLTHLLWLKADGNRLRSAQMNELPYLQIASFAYNQITDTEGISHPRLETLNLKGNSIHMVTGLDPEKLISLHTVELRGNQLESTLGINLPKLKNLYLAQNMLKKVEGLEDLSNLTTLHLRDNQIDTLSGFSREMKSLQYLNLRGNMVANLGELAKLRDLPKLRALVLLDNPCTDETSYRQEALVQMPYLERLDKEFYEEEERAEADVIRQRLKEEKEQEPEPQRDLEPEQSLI.

The span at 1-30 (MSDEDDLEDSEPDQDDSEKEEDEKETEEGE) shows a compositional bias: acidic residues. The interval 1 to 47 (MSDEDDLEDSEPDQDDSEKEEDEKETEEGEDYRKEGEEFPEEWLPTP) is disordered. LRR repeat units follow at residues 92–113 (HLRY…NYLT), 114–134 (HLLW…NELP), 135–155 (YLQI…ISHP), 156–177 (RLET…DPEK), 180–200 (SLHT…INLP), 201–222 (KLKN…EDLS), 223–244 (NLTT…SREM), and 246–267 (SLQY…AKLR). The interaction with RSPH9 stretch occupies residues 208-343 (AQNMLKKVEG…RDLEPEQSLI (136 aa)). Positions 280–318 (NPCTDETSYRQEALVQMPYLERLDKEFYEEEERAEADVI) constitute an LRRCT domain. Positions 307 to 329 (YEEEERAEADVIRQRLKEEKEQE) form a coiled coil. The segment covering 318–337 (IRQRLKEEKEQEPEPQRDLE) has biased composition (basic and acidic residues). A disordered region spans residues 318–343 (IRQRLKEEKEQEPEPQRDLEPEQSLI).

In terms of assembly, component of the axonemal radial spoke complex. Interacts with RSPH3. Interacts with RSPH9. As to expression, expressed in spermatozoa.

It is found in the cell projection. It localises to the cilium. Its subcellular location is the flagellum. The protein localises to the cytoplasm. The protein resides in the cytoskeleton. It is found in the flagellum axoneme. Functionally, essential for sperm motility and male fertility. Plays an important role in the proper assembly of the third radial spoke (RS3) head and the bridge structure between RS2 and RS3 in the sperm flagella. This is Leucine-rich repeat-containing protein 23 (LRRC23) from Homo sapiens (Human).